The following is a 226-amino-acid chain: PKHD-type hydroxylase Plav_0377 (226 aa).

Residues 78–178 (KVLPPRFNRY…RLASFFWVQS (101 aa)) form the Fe2OG dioxygenase domain. Fe cation-binding residues include His96, Asp98, and His159. 2-oxoglutarate is bound at residue Arg169.

Requires Fe(2+) as cofactor. It depends on L-ascorbate as a cofactor.

The protein is PKHD-type hydroxylase Plav_0377 of Parvibaculum lavamentivorans (strain DS-1 / DSM 13023 / NCIMB 13966).